Consider the following 414-residue polypeptide: Hydroxysqualene dehydroxylase (414 aa).

It belongs to the HpnE family.

The catalysed reaction is squalene + FAD + H2O + H(+) = hydroxysqualene + FADH2. It functions in the pathway secondary metabolite biosynthesis; hopanoid biosynthesis. Functionally, involved in the biosynthesis of the hopanoid precursor squalene (SQ) from farnesyl diphosphate (FPP). Catalyzes the third (last) step, the reduction of hydroxysqualene (HSQ) to SQ. The sequence is that of Hydroxysqualene dehydroxylase from Zymomonas mobilis subsp. mobilis (strain ATCC 31821 / ZM4 / CP4).